The sequence spans 1264 residues: Kinesin-like protein KIN-14B (1264 aa).

A compositionally biased stretch (polar residues) spans 1–10 (MAEQKSTNMW). Residues 1–52 (MAEQKSTNMWNWEVTGFESKKSPSSEEGVHRTPSSMLRRYSIPKNSLPPHSS) form a disordered region. The segment covering 18–30 (ESKKSPSSEEGVH) has biased composition (basic and acidic residues). Residues 53-84 (ELASKVQSLKDKVQLAKDDYVGLRQEATDLQE) adopt a coiled-coil conformation. Positions 138 to 452 (NVKVFCRARP…LNYAARARNT (315 aa)) constitute a Kinesin motor domain. Residue 219–226 (GQTHAGKT) coordinates ATP. 3 coiled-coil regions span residues 462-511 (IKKW…YNEV), 545-592 (QLRN…LKSD), and 617-640 (TKKL…ENEK). The tract at residues 588-615 (ALKSDMTRSRDPLEPQPRAAENTLDSSA) is disordered. Over residues 589-600 (LKSDMTRSRDPL) the composition is skewed to basic and acidic residues. The segment covering 652-668 (SSTQVSSPSSKASPTVQ) has biased composition (low complexity). 2 disordered regions span residues 652–684 (SSTQ…SVDK) and 1117–1136 (PEQE…SISS).

The protein belongs to the TRAFAC class myosin-kinesin ATPase superfamily. Kinesin family. KIN-14 subfamily. As to quaternary structure, homodimer and heterodimer with KCA1. Interacts with CDKA-1. Interacts with At4g14310. Expressed in roots, leaves, stems and flowers.

Its subcellular location is the cell membrane. In terms of biological role, kinesin-like protein required for chloroplast movements and anchor to the plasma membrane. Mediates chloroplast movement via chloroplast actin (cp-actin) filaments. Required for the chloroplast avoidance response under high intensity blue light. Mediates redundantly with CHUP1 the nuclear avoidance response under high intensity blue light. May be involved in division plane determination. The protein is Kinesin-like protein KIN-14B of Arabidopsis thaliana (Mouse-ear cress).